Consider the following 31-residue polypeptide: Cytochrome b6-f complex subunit 6 (31 aa).

Residues 4–24 traverse the membrane as a helical segment; sequence ITSYFGFLLAALTITSALLIG.

The protein belongs to the PetL family. As to quaternary structure, the 4 large subunits of the cytochrome b6-f complex are cytochrome b6, subunit IV (17 kDa polypeptide, PetD), cytochrome f and the Rieske protein, while the 4 small subunits are PetG, PetL, PetM and PetN. The complex functions as a dimer.

It localises to the plastid. The protein localises to the chloroplast thylakoid membrane. Functionally, component of the cytochrome b6-f complex, which mediates electron transfer between photosystem II (PSII) and photosystem I (PSI), cyclic electron flow around PSI, and state transitions. PetL is important for photoautotrophic growth as well as for electron transfer efficiency and stability of the cytochrome b6-f complex. This Magnolia grandiflora (Southern magnolia) protein is Cytochrome b6-f complex subunit 6.